The following is a 180-amino-acid chain: ATP synthase subunit delta (180 aa).

This sequence belongs to the ATPase delta chain family. As to quaternary structure, F-type ATPases have 2 components, F(1) - the catalytic core - and F(0) - the membrane proton channel. F(1) has five subunits: alpha(3), beta(3), gamma(1), delta(1), epsilon(1). F(0) has three main subunits: a(1), b(2) and c(10-14). The alpha and beta chains form an alternating ring which encloses part of the gamma chain. F(1) is attached to F(0) by a central stalk formed by the gamma and epsilon chains, while a peripheral stalk is formed by the delta and b chains.

Its subcellular location is the cell membrane. In terms of biological role, f(1)F(0) ATP synthase produces ATP from ADP in the presence of a proton or sodium gradient. F-type ATPases consist of two structural domains, F(1) containing the extramembraneous catalytic core and F(0) containing the membrane proton channel, linked together by a central stalk and a peripheral stalk. During catalysis, ATP synthesis in the catalytic domain of F(1) is coupled via a rotary mechanism of the central stalk subunits to proton translocation. Functionally, this protein is part of the stalk that links CF(0) to CF(1). It either transmits conformational changes from CF(0) to CF(1) or is implicated in proton conduction. In Latilactobacillus sakei subsp. sakei (strain 23K) (Lactobacillus sakei subsp. sakei), this protein is ATP synthase subunit delta.